The chain runs to 344 residues: Nicotinate-nucleotide--dimethylbenzimidazole phosphoribosyltransferase (344 aa).

Catalysis depends on Glu-311, which acts as the Proton acceptor.

Belongs to the CobT family.

It catalyses the reaction 5,6-dimethylbenzimidazole + nicotinate beta-D-ribonucleotide = alpha-ribazole 5'-phosphate + nicotinate + H(+). It participates in nucleoside biosynthesis; alpha-ribazole biosynthesis; alpha-ribazole from 5,6-dimethylbenzimidazole: step 1/2. Catalyzes the synthesis of alpha-ribazole-5'-phosphate from nicotinate mononucleotide (NAMN) and 5,6-dimethylbenzimidazole (DMB). The sequence is that of Nicotinate-nucleotide--dimethylbenzimidazole phosphoribosyltransferase from Aromatoleum aromaticum (strain DSM 19018 / LMG 30748 / EbN1) (Azoarcus sp. (strain EbN1)).